The primary structure comprises 463 residues: Asparagine--tRNA ligase (463 aa).

It belongs to the class-II aminoacyl-tRNA synthetase family. As to quaternary structure, homodimer.

It is found in the cytoplasm. The enzyme catalyses tRNA(Asn) + L-asparagine + ATP = L-asparaginyl-tRNA(Asn) + AMP + diphosphate + H(+). This Bacillus thuringiensis subsp. konkukian (strain 97-27) protein is Asparagine--tRNA ligase.